The following is a 604-amino-acid chain: MPSSSTDVDAIRNFCIIAHIDHGKSTLADRLLEVTGTLQHNQMTAQVLDDMDLERERGITIKSHAIQMHHKAGDGRAYILNLIDTPGHVDFSYEVSRSLAACEGALLVVDATQGVEAQTIANLYLAVEAGLEIIPVINKIDLPSADVEGVAQQIIDLIGVDREEIVEVSAKAGIGIDSLLDAVISRVPAPADHRSMPLRALIFDSVFDAYRGAVVYLRIVDGVLRKGDRVRFFANDKIFVADEIGTMGLKRQPNTVLEAGNVGYLICSIKDVKDAKVGDTVTLADNSAKERLSGYKDVKPMVFSGLYPVDSDEFEDLRESLEKLSLNDASLVYTPETSAALGFGFRCGFLGLLHMEIIQERLEREYKVNIITTVPNVEYRVLRTNGETILVDNPSKMPEAGLISEVEEPYVRIQIITMADYIGNVMKLSMERRGEYKNTDYLDTLRVNLHFEFPLAEIVFDFHDKLKSVSKGYASMDYEYIGYRRSDLVKLDVLLNGEPVDALSTVVHRSKAYEWGRKLCQKLKTIIPKQMYEVAIQAAIGSRVISRETISAIRKNVLAKCYGGDISRKRKLLEKQKEGKKRMKQVGRVEVPQEAFLAVLNIDE.

The 183-residue stretch at 9–191 (DAIRNFCIIA…AVISRVPAPA (183 aa)) folds into the tr-type G domain. GTP contacts are provided by residues 21–26 (DHGKST) and 138–141 (NKID).

It belongs to the TRAFAC class translation factor GTPase superfamily. Classic translation factor GTPase family. LepA subfamily.

Its subcellular location is the cell inner membrane. The catalysed reaction is GTP + H2O = GDP + phosphate + H(+). In terms of biological role, required for accurate and efficient protein synthesis under certain stress conditions. May act as a fidelity factor of the translation reaction, by catalyzing a one-codon backward translocation of tRNAs on improperly translocated ribosomes. Back-translocation proceeds from a post-translocation (POST) complex to a pre-translocation (PRE) complex, thus giving elongation factor G a second chance to translocate the tRNAs correctly. Binds to ribosomes in a GTP-dependent manner. In Prosthecochloris aestuarii (strain DSM 271 / SK 413), this protein is Elongation factor 4.